An 874-amino-acid chain; its full sequence is Alanine--tRNA ligase (874 aa).

Histidine 562, histidine 566, cysteine 664, and histidine 668 together coordinate Zn(2+).

This sequence belongs to the class-II aminoacyl-tRNA synthetase family. Requires Zn(2+) as cofactor.

The protein localises to the cytoplasm. The enzyme catalyses tRNA(Ala) + L-alanine + ATP = L-alanyl-tRNA(Ala) + AMP + diphosphate. Catalyzes the attachment of alanine to tRNA(Ala) in a two-step reaction: alanine is first activated by ATP to form Ala-AMP and then transferred to the acceptor end of tRNA(Ala). Also edits incorrectly charged Ser-tRNA(Ala) and Gly-tRNA(Ala) via its editing domain. This is Alanine--tRNA ligase from Neisseria meningitidis serogroup A / serotype 4A (strain DSM 15465 / Z2491).